The chain runs to 687 residues: Triadin (687 aa).

At 1–47 (MTEITAEGNASITTTVIDNKNGSVPKSPGKVLKRTVTEDIVTTFSSP) the chain is on the cytoplasmic side. A helical membrane pass occupies residues 48–68 (AAWLLVIALIITWSAVAIVMF). Residues 69–687 (DLVDYKNFSA…NSPGQKQQEQ (619 aa)) lie on the Lumenal side of the membrane. A compositionally biased stretch (acidic residues) spans 117–130 (DGDEDDEDADEDID). Disordered regions lie at residues 117–265 (DGDE…EQKD), 280–643 (GDLK…QKSP), and 660–687 (FQFPVTPVQHSGENPGKSNSPGQKQQEQ). The span at 131-265 (KGEIEEPPLK…PAVPKHEQKD (135 aa)) shows a compositional bias: basic and acidic residues. Polar residues predominate over residues 295–306 (LTASRPALSTPS). Residues S303 and S306 each carry the phosphoserine modification. The span at 307 to 356 (LEEKEKEEKKKVEKKVTSDTKKKEKGEAKKKSEKETVIDGKGKEPGKPPE) shows a compositional bias: basic and acidic residues. Over residues 357 to 370 (TKQTTTKLTTQAAA) the composition is skewed to low complexity. 4 stretches are compositionally biased toward basic and acidic residues: residues 371 to 390 (TKDEKKEDSKKMKKPPEEKP), 396 to 431 (EKKEKHIEPAKTPKKEHPAPSEKHRKAKAEQAKEEI), 442 to 459 (GKKEEKAKTVEQGKDVKP), and 466 to 501 (LKKEEKSEPQPKKEVKLETQLKKEEKSEPQVKKEAK). N514 is a glycosylation site (N-linked (GlcNAc...) asparagine). Composition is skewed to basic and acidic residues over residues 539–583 (TAEK…KVPP) and 594–630 (TRAEKRGKISKDSKDAPAPKKDKDSKDVLHSKKDKEV). Polar residues-rich tracts occupy residues 631–643 (TNNVSSPKKQKSP) and 667–687 (VQHSGENPGKSNSPGQKQQEQ).

In terms of assembly, homooligomer of variable subunit number; disulfide-linked. Interacts with CASQ1 in skeletal muscle. Interacts with CASQ2. Interacts with RYR1 in skeletal muscle. Phosphorylated by CaMK2. Post-translationally, N-glycosylated. Detected in skeletal muscle (at protein level). Detected in skeletal muscle.

It localises to the sarcoplasmic reticulum membrane. It is found in the microsome. The protein resides in the cell membrane. The protein localises to the sarcolemma. Contributes to the regulation of lumenal Ca2+ release via the sarcoplasmic reticulum calcium release channels RYR1 and RYR2, a key step in triggering skeletal and heart muscle contraction. Required for normal organization of the triad junction, where T-tubules and the sarcoplasmic reticulum terminal cisternae are in close contact. Required for normal skeletal muscle strength. Plays a role in excitation-contraction coupling in the heart and in regulating the rate of heart beats. The chain is Triadin from Rattus norvegicus (Rat).